Reading from the N-terminus, the 328-residue chain is Protein phosphatase 1 regulatory inhibitor subunit PPP1R7 homolog (328 aa).

LRR repeat units follow at residues 13–36 (IGDS…VELP), 37–59 (PNLI…IAQL), 61–82 (TLKK…PLSH), 86–110 (LSDL…IFTK), 111–130 (LLVY…ISKA), 131–153 (SSTL…IEHL), 154–177 (HNLQ…NFTK), 179–196 (EELW…LCGL), 197–221 (KCIK…CVAL), 223–240 (ELYL…LSAL), 241–264 (VNLR…NLTK), 266–287 (EDLW…AVTG), and 289–312 (KEKL…VAAV).

In terms of assembly, interacts with human protein phosphatase PPP1C.

Its function is as follows. Inhibitor of protein-phosphatase 1 (PP1). Binds to and inhibits PP1 activity. This is Protein phosphatase 1 regulatory inhibitor subunit PPP1R7 homolog from Arabidopsis thaliana (Mouse-ear cress).